The chain runs to 550 residues: Arginine--tRNA ligase (550 aa).

A 'HIGH' region motif is present at residues 130–140; sequence ANPTGPIHIGG.

This sequence belongs to the class-I aminoacyl-tRNA synthetase family. Monomer.

It localises to the cytoplasm. The catalysed reaction is tRNA(Arg) + L-arginine + ATP = L-arginyl-tRNA(Arg) + AMP + diphosphate. This Mycobacterium marinum (strain ATCC BAA-535 / M) protein is Arginine--tRNA ligase.